The chain runs to 295 residues: Bifunctional protein FolD (295 aa).

NADP(+) is bound by residues 165–167 (GRS), S190, and I231.

Belongs to the tetrahydrofolate dehydrogenase/cyclohydrolase family. Homodimer.

It carries out the reaction (6R)-5,10-methylene-5,6,7,8-tetrahydrofolate + NADP(+) = (6R)-5,10-methenyltetrahydrofolate + NADPH. The catalysed reaction is (6R)-5,10-methenyltetrahydrofolate + H2O = (6R)-10-formyltetrahydrofolate + H(+). Its pathway is one-carbon metabolism; tetrahydrofolate interconversion. Its function is as follows. Catalyzes the oxidation of 5,10-methylenetetrahydrofolate to 5,10-methenyltetrahydrofolate and then the hydrolysis of 5,10-methenyltetrahydrofolate to 10-formyltetrahydrofolate. The polypeptide is Bifunctional protein FolD (Nitrosomonas europaea (strain ATCC 19718 / CIP 103999 / KCTC 2705 / NBRC 14298)).